We begin with the raw amino-acid sequence, 175 residues long: Lipopolysaccharide export system protein LptH (175 aa).

The first 24 residues, Met-1 to Ala-24, serve as a signal peptide directing secretion.

It belongs to the LptA family. In terms of assembly, component of the lipopolysaccharide transport and assembly complex. Mainly exists as a dimer in solution. Tends to oligomerize already in solution. The protomers follow one another in a head-to-tail fashion throughout the crystal lattice, yielding a continuous fiber arrangement.

It is found in the periplasm. Its function is as follows. Involved in the assembly of lipopolysaccharide (LPS). Required for the translocation of LPS from the inner membrane to the outer membrane. May form a bridge between the inner membrane and the outer membrane, via interactions with LptC and LptD, thereby facilitating LPS transfer across the periplasm. Binds LPS. Important for cell envelope stability and essential for growth, cell viability and ability to cause infection in different animal models. This Pseudomonas aeruginosa (strain ATCC 15692 / DSM 22644 / CIP 104116 / JCM 14847 / LMG 12228 / 1C / PRS 101 / PAO1) protein is Lipopolysaccharide export system protein LptH.